The following is a 98-amino-acid chain: Serine rich endogenous peptide 10 (98 aa).

Residues 1–29 form the signal peptide; it reads MERKKFSSKFIHLLIVFLLLCTFLSRTES. A disordered region spans residues 50-98; it reads NSAIGTPSSTSDHAPGSNGRKLMSIYRPNGDIFTGPSGSGHGGGRTPAP. Over residues 52-61 the composition is skewed to polar residues; sequence AIGTPSSTSD. Short sequence motifs (SCOOP motif) lie at residues 52–66 and 80–94; these read AIGT…APGS and DIFT…GGGR. 2 short sequence motifs (sxS motif essential for MIK2 binding) span residues 58 to 60 and 86 to 88; these read STS and SGS. Over residues 86–98 the composition is skewed to gly residues; sequence SGSGHGGGRTPAP.

It belongs to the serine rich endogenous peptide (SCOOP) phytocytokine family. As to quaternary structure, interacts with MIK2 (via extracellular leucine-rich repeat domain); this interaction triggers the formation of complex between MIK2 and the BAK1/SERK3 and SERK4 coreceptors, and subsequent BAK1 activation by phosphorylation. As to expression, mostly expressed in leaves and seedlings shoots, to a lower extent, in roots, but barely in flowers.

The protein localises to the cell membrane. It localises to the secreted. It is found in the extracellular space. The protein resides in the apoplast. Brassicaceae-specific phytocytokine (plant endogenous peptide released into the apoplast) perceived by MIK2 in a BAK1/SERK3 and SERK4 coreceptors-dependent manner, that modulates various physiological and antimicrobial processes including growth prevention and reactive oxygen species (ROS) response regulation. Inhibits root growth and regulates root meristems. Promotes ROS production and MAPK (e.g. MPK3, MPK4 and MPK6) activation in a MIK2-dependent manner, thus leading to the up-regulation of immune-related marker genes (e.g. WRKY30, WRKY33 and CYP81F2). The protein is Serine rich endogenous peptide 10 of Arabidopsis thaliana (Mouse-ear cress).